A 204-amino-acid chain; its full sequence is Outer-membrane lipoprotein carrier protein (204 aa).

A signal peptide spans 1–21 (MKKYLNLTALLLVGISNVTWA).

This sequence belongs to the LolA family. As to quaternary structure, monomer.

It is found in the periplasm. Participates in the translocation of lipoproteins from the inner membrane to the outer membrane. Only forms a complex with a lipoprotein if the residue after the N-terminal Cys is not an aspartate (The Asp acts as a targeting signal to indicate that the lipoprotein should stay in the inner membrane). This is Outer-membrane lipoprotein carrier protein from Histophilus somni (strain 129Pt) (Haemophilus somnus).